Here is a 183-residue protein sequence, read N- to C-terminus: Probable adenylyl-sulfate kinase (183 aa).

Position 17 to 24 (17 to 24 (GLPGSGKT)) interacts with ATP. Residue serine 91 is the Phosphoserine intermediate of the active site.

It belongs to the APS kinase family.

The enzyme catalyses adenosine 5'-phosphosulfate + ATP = 3'-phosphoadenylyl sulfate + ADP + H(+). Its pathway is sulfur metabolism; hydrogen sulfide biosynthesis; sulfite from sulfate: step 2/3. Its function is as follows. Catalyzes the synthesis of activated sulfate. The sequence is that of Probable adenylyl-sulfate kinase (cysC) from Aeropyrum pernix (strain ATCC 700893 / DSM 11879 / JCM 9820 / NBRC 100138 / K1).